A 181-amino-acid chain; its full sequence is MSIKKENTLDYSKITATLMKTFNYKSVMQVPKVDKVVINMGVGDAIFNVKVLDDVVEELKLLSGQSPVITKAKKAISNFKLREGMPIGAKVTLRGARKEAFLYKLTRLVLPRVRDFRGISGKSFDGRGNYALGLKEQIVFPEINIDKVKKIRGMDIIIVTTAKNNTQAKKLLELYGMPFKN.

This sequence belongs to the universal ribosomal protein uL5 family. In terms of assembly, part of the 50S ribosomal subunit; part of the 5S rRNA/L5/L18/L25 subcomplex. Contacts the 5S rRNA and the P site tRNA. Forms a bridge to the 30S subunit in the 70S ribosome.

In terms of biological role, this is one of the proteins that bind and probably mediate the attachment of the 5S RNA into the large ribosomal subunit, where it forms part of the central protuberance. In the 70S ribosome it contacts protein S13 of the 30S subunit (bridge B1b), connecting the 2 subunits; this bridge is implicated in subunit movement. Contacts the P site tRNA; the 5S rRNA and some of its associated proteins might help stabilize positioning of ribosome-bound tRNAs. This Aster yellows witches'-broom phytoplasma (strain AYWB) protein is Large ribosomal subunit protein uL5.